The following is a 180-amino-acid chain: uncharacterized protein (180 aa).

This is an uncharacterized protein from Aquifex aeolicus (strain VF5).